We begin with the raw amino-acid sequence, 239 residues long: Protein GrpE (239 aa).

Disordered regions lie at residues 1–60 (MIEN…SNND) and 208–239 (SMGP…SEDV). The span at 28-42 (SMQNSTTENDELSSQ) shows a compositional bias: polar residues. 2 stretches are compositionally biased toward basic and acidic residues: residues 43-53 (KTEEINTEELK) and 216-225 (SQQEVEKDTV). Acidic residues predominate over residues 226–239 (EGDVDSDANTSEDV).

It belongs to the GrpE family. Homodimer.

The protein resides in the cytoplasm. Participates actively in the response to hyperosmotic and heat shock by preventing the aggregation of stress-denatured proteins, in association with DnaK and GrpE. It is the nucleotide exchange factor for DnaK and may function as a thermosensor. Unfolded proteins bind initially to DnaJ; upon interaction with the DnaJ-bound protein, DnaK hydrolyzes its bound ATP, resulting in the formation of a stable complex. GrpE releases ADP from DnaK; ATP binding to DnaK triggers the release of the substrate protein, thus completing the reaction cycle. Several rounds of ATP-dependent interactions between DnaJ, DnaK and GrpE are required for fully efficient folding. The polypeptide is Protein GrpE (Prochlorococcus marinus (strain MIT 9301)).